We begin with the raw amino-acid sequence, 402 residues long: CD2 homolog (402 aa).

The signal sequence occupies residues 1 to 16; that stretch reads MIIIVIFLMCLKIVLN. Residues 17 to 204 are Extracellular-facing; sequence NIIIWSTLNQ…ILKYQNYLST (188 aa). 18 N-linked (GlcNAc...) asparagine; by host glycosylation sites follow: Asn-25, Asn-37, Asn-52, Asn-55, Asn-72, Asn-77, Asn-81, Asn-89, Asn-95, Asn-108, Asn-125, Asn-137, Asn-148, Asn-153, Asn-169, Asn-177, Asn-184, and Asn-190. Intrachain disulfides connect Cys-126-Cys-191 and Cys-133-Cys-174. A helical transmembrane segment spans residues 205-225; sequence LFYIIIFIVSGLIIGIFISII. The Cytoplasmic segment spans residues 226–402; the sequence is SVLSIRRKRK…ISLIHVDRII (177 aa). The disordered stretch occupies residues 238-276; it reads VEEIESPPPSESNEEDISHDDTTSIHEPSPREPLLPKPY. The span at 256–267 shows a compositional bias: basic and acidic residues; the sequence is HDDTTSIHEPSP. Tandem repeats lie at residues 302 to 307, 308 to 313, 314 to 319, 320 to 325, 326 to 331, 332 to 337, 338 to 343, 344 to 349, 350 to 355, 356 to 361, and 362 to 367. An 11 X 6 AA tandem repeats of K-P-C-[PRS]-[P]-[PS] region spans residues 302–367; it reads KPCPPPKPCP…CPPSKPCPSP (66 aa). Over residues 319 to 386 the composition is skewed to pro residues; sequence PKPCPPPKPC…PSIPLLPNIP (68 aa). The segment at 319–388 is disordered; sequence PKPCPPPKPC…IPLLPNIPPL (70 aa).

It belongs to the asfivirus CD2 homolog protein family. Both glycosylated and nonglycosylated forms interact (via C-terminus) with the host AP-1 complex. Cleaved into two fragments of 63 kDa and 26 kDa containing respectively the glycosylated N-terminus and the nonglycosylated C-terminus. A full-length 89-kDa glycosylated form also exists.

The protein localises to the host cell membrane. The protein resides in the virion membrane. It localises to the host Golgi apparatus. Its function is as follows. May play an immunosuppressive role by inhibiting lymphocyte proliferation and subsequently facilitating viral replication and generalization of infection. Responsible for viral hemadsorption, which may help viral spread. Increases virus replication in the tick vector at the step of virus uptake or replication in the tick gut. May play a role in the host Golgi reorganization to yield viral factories. May play a role in host cell penetration. In Ornithodoros (relapsing fever ticks), this protein is CD2 homolog.